The following is a 396-amino-acid chain: Methionine import ATP-binding protein MetN 2 (396 aa).

In terms of domain architecture, ABC transporter spans 41–280; it reads VSFELVGKVF…PRHGATRALL (240 aa). 77-84 provides a ligand contact to ATP; sequence GRSGAGKS.

It belongs to the ABC transporter superfamily. Methionine importer (TC 3.A.1.24) family. As to quaternary structure, the complex is composed of two ATP-binding proteins (MetN), two transmembrane proteins (MetI) and a solute-binding protein (MetQ).

Its subcellular location is the cell inner membrane. The catalysed reaction is L-methionine(out) + ATP + H2O = L-methionine(in) + ADP + phosphate + H(+). It carries out the reaction D-methionine(out) + ATP + H2O = D-methionine(in) + ADP + phosphate + H(+). In terms of biological role, part of the ABC transporter complex MetNIQ involved in methionine import. Responsible for energy coupling to the transport system. The sequence is that of Methionine import ATP-binding protein MetN 2 from Burkholderia mallei (strain ATCC 23344).